We begin with the raw amino-acid sequence, 291 residues long: MKIAVYGKGGIGKSTTSCNISVALARRGQKVLQIGCDPKHDSTFTLTGFLIPTIIDTLQSKDYHYEDIWPEDVIHKGYGGVDCVEAGGPPAGAGCGGYVVGETVKLLKELNAFYEYDIILFDVLGDVVCGGFAAPLNYADYCVIITDNGFDALFAANRITASIREKARTHPLRLAGLVGNRTSRRDLINKYVEACPMPVIEVLPIIEDIRVSRVKGKTLFEMVGFEPSLNYVCNYYLGIADQILSQPEGIVPKEIPDRELFSLLSDLYLNPIGGGGQKKKNQENLLGFTRI.

ATP contacts are provided by residues 10-15 and lysine 39; that span reads GIGKST. A Mg(2+)-binding site is contributed by serine 14. Residues cysteine 95 and cysteine 129 each coordinate [4Fe-4S] cluster. An ATP-binding site is contributed by 180–181; the sequence is NR.

This sequence belongs to the NifH/BchL/ChlL family. In terms of assembly, homodimer. Protochlorophyllide reductase is composed of three subunits; ChlL, ChlN and ChlB. [4Fe-4S] cluster is required as a cofactor.

Its subcellular location is the plastid. It localises to the chloroplast. It carries out the reaction chlorophyllide a + oxidized 2[4Fe-4S]-[ferredoxin] + 2 ADP + 2 phosphate = protochlorophyllide a + reduced 2[4Fe-4S]-[ferredoxin] + 2 ATP + 2 H2O. It functions in the pathway porphyrin-containing compound metabolism; chlorophyll biosynthesis (light-independent). Its function is as follows. Component of the dark-operative protochlorophyllide reductase (DPOR) that uses Mg-ATP and reduced ferredoxin to reduce ring D of protochlorophyllide (Pchlide) to form chlorophyllide a (Chlide). This reaction is light-independent. The L component serves as a unique electron donor to the NB-component of the complex, and binds Mg-ATP. This Picea abies (Norway spruce) protein is Light-independent protochlorophyllide reductase iron-sulfur ATP-binding protein.